We begin with the raw amino-acid sequence, 159 residues long: Ribosomal RNA large subunit methyltransferase H (159 aa).

S-adenosyl-L-methionine-binding positions include Gly-108 and 127–132 (FSKMTF).

Belongs to the RNA methyltransferase RlmH family. In terms of assembly, homodimer.

It is found in the cytoplasm. It carries out the reaction pseudouridine(1915) in 23S rRNA + S-adenosyl-L-methionine = N(3)-methylpseudouridine(1915) in 23S rRNA + S-adenosyl-L-homocysteine + H(+). In terms of biological role, specifically methylates the pseudouridine at position 1915 (m3Psi1915) in 23S rRNA. The chain is Ribosomal RNA large subunit methyltransferase H from Clostridium perfringens (strain ATCC 13124 / DSM 756 / JCM 1290 / NCIMB 6125 / NCTC 8237 / Type A).